The chain runs to 342 residues: SWR1-complex protein 5 (342 aa).

Disordered stretches follow at residues 1–126, 142–178, and 214–238; these read MAPT…PVTI, PRTS…DPDS, and LGEN…RMPR. 2 stretches are compositionally biased toward acidic residues: residues 8 to 20 and 33 to 43; these read LAED…DSDF and ISDDDDEEAGE. Basic residues predominate over residues 78–87; that stretch reads GEKRQKKTKT. The BCNT-C domain maps to 260 to 341; the sequence is NLSMASRLQA…RRARMAQAGK (82 aa).

The protein belongs to the SWC5 family. Component of the SWR1 chromatin remodeling complex.

Its subcellular location is the nucleus. Its function is as follows. Component of the SWR1 complex which mediates the ATP-dependent exchange of histone H2A for the H2A variant H2A.Z leading to transcriptional regulation of selected genes by chromatin remodeling. Involved in chromosome stability. This is SWR1-complex protein 5 (crc-2) from Neurospora crassa (strain ATCC 24698 / 74-OR23-1A / CBS 708.71 / DSM 1257 / FGSC 987).